Reading from the N-terminus, the 506-residue chain is Histidine ammonia-lyase (506 aa).

The segment at residues 143–145 is a cross-link (5-imidazolinone (Ala-Gly)); it reads ASG. 2,3-didehydroalanine (Ser) is present on S144.

This sequence belongs to the PAL/histidase family. In terms of processing, contains an active site 4-methylidene-imidazol-5-one (MIO), which is formed autocatalytically by cyclization and dehydration of residues Ala-Ser-Gly.

It is found in the cytoplasm. It carries out the reaction L-histidine = trans-urocanate + NH4(+). Its pathway is amino-acid degradation; L-histidine degradation into L-glutamate; N-formimidoyl-L-glutamate from L-histidine: step 1/3. This Salmonella typhi protein is Histidine ammonia-lyase.